A 33-amino-acid chain; its full sequence is pyr operon leader peptide (33 aa).

The chain is pyr operon leader peptide (pyrL) from Salmonella typhi.